Here is a 719-residue protein sequence, read N- to C-terminus: Aminodeoxychorismate synthase (719 aa).

The 195-residue stretch at 5–199 folds into the Glutamine amidotransferase type-1 domain; that stretch reads RTLLIDNYDS…RDLSLRAAGH (195 aa). Cys-86 functions as the Nucleophile in the catalytic mechanism. Active-site residues include His-173 and Glu-175. The tract at residues 199–224 is disordered; the sequence is HRPPHTERIPAPAPAPAPAPAPAPPA. Residues 209 to 224 are compositionally biased toward pro residues; sequence APAPAPAPAPAPAPPA.

In the C-terminal section; belongs to the anthranilate synthase component I family.

The catalysed reaction is chorismate + L-glutamine = 4-amino-4-deoxychorismate + L-glutamate. Its pathway is antibiotic biosynthesis. Involved in pristinamycin I biosynthesis. Catalyzes the biosynthesis of 4-amino-4-deoxychorismate (ADC) from chorismate and glutamine. The polypeptide is Aminodeoxychorismate synthase (Streptomyces pristinaespiralis).